Consider the following 510-residue polypeptide: MAKKPVMLMILDGFGISDKVDGNAVKAASKPNFDKYFNNYPHTHLGASGLSVGLPDGQMGNSEVGHLNIGAGRIVYQSLTKITKAIEDGDFFKNAALNKAVNNVLENDSTLHLMGLLSPGGVHSHTNHLKGLLQLAKKKNVKKVFVHAFLDGRDVPPSSAKEFIKDIEDYMNEIGLGEIATVSGRYYAMDRDNRWEREELAYNAMVLGKGEEAESAIKAVDASYHDNKTDEFVLPTVIVKEGKPVATIKDKDSVIFFNFRPDRARQITRAIAEEAFDGFKRDRLNIEFVTMTEYDASFKGVDVAFGPENITNTLGEYVSNKGLNQLRIAETEKYAHVTFFFNGGVEEPNKNEDRALISSPKVATYDLKPEMSAYEVTDELLKRLDEDKYDMVILNFANPDMVGHTGILEAAKKAVETVDECLGKIVDKVLKLDGSVFITADHGNSEQMIDYSNGKPMTAHTVNPVPFVYVSNHTEAKKLNEGVLADIAPTMLQEMGLEKPEEMTGKSLFE.

Residues aspartate 12 and serine 62 each coordinate Mn(2+). Serine 62 functions as the Phosphoserine intermediate in the catalytic mechanism. Residues histidine 123, 153 to 154 (RD), arginine 185, arginine 191, 260 to 263 (RPDR), and lysine 333 each bind substrate. Mn(2+) contacts are provided by aspartate 400, histidine 404, aspartate 441, histidine 442, and histidine 460.

The protein belongs to the BPG-independent phosphoglycerate mutase family. Monomer. Mn(2+) is required as a cofactor.

The catalysed reaction is (2R)-2-phosphoglycerate = (2R)-3-phosphoglycerate. It functions in the pathway carbohydrate degradation; glycolysis; pyruvate from D-glyceraldehyde 3-phosphate: step 3/5. Functionally, catalyzes the interconversion of 2-phosphoglycerate and 3-phosphoglycerate. This Clostridium acetobutylicum (strain ATCC 824 / DSM 792 / JCM 1419 / IAM 19013 / LMG 5710 / NBRC 13948 / NRRL B-527 / VKM B-1787 / 2291 / W) protein is 2,3-bisphosphoglycerate-independent phosphoglycerate mutase.